Reading from the N-terminus, the 502-residue chain is 2,3-bisphosphoglycerate-independent phosphoglycerate mutase (502 aa).

Mn(2+) is bound by residues Asp-13 and Ser-63. Ser-63 acts as the Phosphoserine intermediate in catalysis. Residues His-117, 146 to 147 (RD), Arg-177, Arg-183, 251 to 254 (RSDR), and Lys-324 contribute to the substrate site. Mn(2+) is bound by residues Asp-389, His-393, Asp-430, His-431, and His-448.

The protein belongs to the BPG-independent phosphoglycerate mutase family. As to quaternary structure, monomer. It depends on Mn(2+) as a cofactor.

The catalysed reaction is (2R)-2-phosphoglycerate = (2R)-3-phosphoglycerate. It participates in carbohydrate degradation; glycolysis; pyruvate from D-glyceraldehyde 3-phosphate: step 3/5. Catalyzes the interconversion of 2-phosphoglycerate and 3-phosphoglycerate. The polypeptide is 2,3-bisphosphoglycerate-independent phosphoglycerate mutase (Ureaplasma urealyticum serovar 10 (strain ATCC 33699 / Western)).